Consider the following 315-residue polypeptide: Olfactory receptor 4A8 (315 aa).

Residues 1–24 (MRQNNNITEFVLLGFSQYPDVQNA) lie on the Extracellular side of the membrane. The N-linked (GlcNAc...) asparagine glycan is linked to Asn-6. A helical transmembrane segment spans residues 25–45 (LFVMFLLIYIVTMVGNLLIVV). At 46 to 57 (SIIASPFLGSPV) the chain is on the cytoplasmic side. The helical transmembrane segment at 58–80 (YFFLACLSFIDAVYSTTISPVLI) threads the bilayer. Topologically, residues 81 to 95 (VDLLCDKKTISFPAC) are extracellular. Cys-95 and Cys-177 form a disulfide bridge. A helical transmembrane segment spans residues 96–116 (MGQLFIEHLFGDTDVFLLVVM). At 117–139 (AYDRYVATCKPLRYLTIMNRQVC) the chain is on the cytoplasmic side. A helical membrane pass occupies residues 140–160 (ILLLVVAVTGGFLHSVFQILV). Residues 161-193 (VYSLPFCGPNVIYHFFCNIYPLLDLECTDTYFV) lie on the Extracellular side of the membrane. The helical transmembrane segment at 194 to 214 (GLAVVFNGGAICMVIFTLLLI) threads the bilayer. The Cytoplasmic segment spans residues 215–235 (SYGVILNSLKTYSPEGRHKAP). Residues 236–256 (FICSSHFIMVILFFVPCIFLY) traverse the membrane as a helical segment. At 257 to 266 (VRPVSNFPID) the chain is on the extracellular side. A helical transmembrane segment spans residues 267-287 (KFLTVFYSVITPKLNPFIYML). At 288–315 (RNSEMRNAIENLLGYQSGKTGFRCSKLN) the chain is on the cytoplasmic side.

Belongs to the G-protein coupled receptor 1 family.

The protein resides in the cell membrane. In terms of biological role, odorant receptor. The chain is Olfactory receptor 4A8 (OR4A8) from Homo sapiens (Human).